The primary structure comprises 69 residues: U2-agatoxin-Ao1z (69 aa).

The first 20 residues, 1 to 20, serve as a signal peptide directing secretion; that stretch reads MRAIISLLLISAMVFSMIEA. Positions 21–34 are excised as a propeptide; that stretch reads VPVEEGLQLFEGER. Intrachain disulfides connect cysteine 37–cysteine 53, cysteine 44–cysteine 58, and cysteine 52–cysteine 68.

It belongs to the neurotoxin 01 (U2-agtx) family. As to expression, expressed by the venom gland.

The protein localises to the secreted. Functionally, insect active toxin causing rapid but reversible paralysis in crickets. No activity shown in mammals. Does not show effect on mammalian voltage-gated calcium channels. This chain is U2-agatoxin-Ao1z, found in Agelena orientalis (Funnel-web spider).